Here is a 155-residue protein sequence, read N- to C-terminus: Deoxyuridine 5'-triphosphate nucleotidohydrolase (155 aa).

Substrate-binding positions include 75–77, Asn88, and 92–94; these read RSG and TVD.

The protein belongs to the dUTPase family. It depends on Mg(2+) as a cofactor.

It catalyses the reaction dUTP + H2O = dUMP + diphosphate + H(+). It functions in the pathway pyrimidine metabolism; dUMP biosynthesis; dUMP from dCTP (dUTP route): step 2/2. This enzyme is involved in nucleotide metabolism: it produces dUMP, the immediate precursor of thymidine nucleotides and it decreases the intracellular concentration of dUTP so that uracil cannot be incorporated into DNA. The polypeptide is Deoxyuridine 5'-triphosphate nucleotidohydrolase (Caulobacter vibrioides (strain ATCC 19089 / CIP 103742 / CB 15) (Caulobacter crescentus)).